The following is a 159-amino-acid chain: Transcriptional repressor NrdR (159 aa).

A zinc finger spans residues 3-34 (CPFCHTPDTSVIDSRVSEEGDRIRRRRRCPHC). One can recognise an ATP-cone domain in the interval 49-139 (PQVVKQDGNR…VYRSFQGAAD (91 aa)).

This sequence belongs to the NrdR family. Zn(2+) is required as a cofactor.

In terms of biological role, negatively regulates transcription of bacterial ribonucleotide reductase nrd genes and operons by binding to NrdR-boxes. The protein is Transcriptional repressor NrdR of Nitrosospira multiformis (strain ATCC 25196 / NCIMB 11849 / C 71).